The following is a 539-amino-acid chain: Probable protein kinase UbiB (539 aa).

A helical transmembrane segment spans residues 23–43 (DLLFALPLPWWMLAVRFVLPW). The Protein kinase domain maps to 125-492 (RFDETPLASA…WHDRKDEPVL (368 aa)). ATP-binding positions include 131-139 (LASASVAQV) and Lys-153. Asp-288 (proton acceptor) is an active-site residue. Transmembrane regions (helical) follow at residues 494–514 (LIGA…SEAA) and 517–537 (LLTL…YLIV).

It belongs to the ABC1 family. UbiB subfamily.

It localises to the cell inner membrane. Its pathway is cofactor biosynthesis; ubiquinone biosynthesis [regulation]. Functionally, is probably a protein kinase regulator of UbiI activity which is involved in aerobic coenzyme Q (ubiquinone) biosynthesis. This chain is Probable protein kinase UbiB, found in Pseudomonas syringae pv. tomato (strain ATCC BAA-871 / DC3000).